The primary structure comprises 124 residues: Ribonuclease pancreatic (124 aa).

Substrate-binding residues include lysine 7 and arginine 10. The active-site Proton acceptor is the histidine 12. 4 disulfides stabilise this stretch: cysteine 26/cysteine 84, cysteine 40/cysteine 95, cysteine 58/cysteine 110, and cysteine 65/cysteine 72. Asparagine 34 carries N-linked (GlcNAc...) asparagine glycosylation. Residues 41–45 (KPVNT), lysine 66, and arginine 85 contribute to the substrate site. The active-site Proton donor is histidine 119.

This sequence belongs to the pancreatic ribonuclease family. Monomer. Interacts with and forms tight 1:1 complexes with RNH1. Dimerization of two such complexes may occur. Interaction with RNH1 inhibits this protein. Pancreas.

It localises to the secreted. The catalysed reaction is an [RNA] containing cytidine + H2O = an [RNA]-3'-cytidine-3'-phosphate + a 5'-hydroxy-ribonucleotide-3'-[RNA].. It catalyses the reaction an [RNA] containing uridine + H2O = an [RNA]-3'-uridine-3'-phosphate + a 5'-hydroxy-ribonucleotide-3'-[RNA].. Its function is as follows. Endonuclease that catalyzes the cleavage of RNA on the 3' side of pyrimidine nucleotides. Acts on single-stranded and double-stranded RNA. In Eudorcas thomsonii (Thomson's gazelle), this protein is Ribonuclease pancreatic (RNASE1).